Consider the following 188-residue polypeptide: MPDSLRPLLRKPFGVLYTGIGSDAVKSLVKDLNNPTKLISVGDVTTFHLLDSNIIPDILIVDDRTKRAPASSQVVFGTKHKGFAEITVDNPPGVITEDLINVISDAIVSDKNVRIFVQGEEDLAALPAILMAPLNSVVLYGQPDEGVMLVRVTESLKAELKDLFDKILEKQDHKEQLLHNVRRKLNGY.

D43, V44, D62, E121, and D144 together coordinate GTP.

This sequence belongs to the GTP-dependent DPCK family.

It catalyses the reaction 3'-dephospho-CoA + GTP = GDP + CoA + H(+). It participates in cofactor biosynthesis; coenzyme A biosynthesis. Functionally, catalyzes the GTP-dependent phosphorylation of the 3'-hydroxyl group of dephosphocoenzyme A to form coenzyme A (CoA). The protein is GTP-dependent dephospho-CoA kinase of Methanococcoides burtonii (strain DSM 6242 / NBRC 107633 / OCM 468 / ACE-M).